Here is a 204-residue protein sequence, read N- to C-terminus: N-(5'-phosphoribosyl)anthranilate isomerase (204 aa).

The protein belongs to the TrpF family.

The enzyme catalyses N-(5-phospho-beta-D-ribosyl)anthranilate = 1-(2-carboxyphenylamino)-1-deoxy-D-ribulose 5-phosphate. The protein operates within amino-acid biosynthesis; L-tryptophan biosynthesis; L-tryptophan from chorismate: step 3/5. In Bacillus mycoides (strain KBAB4) (Bacillus weihenstephanensis), this protein is N-(5'-phosphoribosyl)anthranilate isomerase.